Here is a 333-residue protein sequence, read N- to C-terminus: Foldase protein PrsA (333 aa).

Positions 1–22 are cleaved as a signal peptide; that stretch reads MKSAKQIATALLVGMFTFSAVG. Cysteine 23 is lipidated: N-palmitoyl cysteine. Cysteine 23 carries the S-diacylglycerol cysteine lipid modification. Positions 192–283 constitute a PpiC domain; that stretch reads PNTVHLAHIL…FGWHVIKCIK (92 aa).

This sequence belongs to the PrsA family.

Its subcellular location is the cell membrane. The enzyme catalyses [protein]-peptidylproline (omega=180) = [protein]-peptidylproline (omega=0). In terms of biological role, plays a major role in protein secretion by helping the post-translocational extracellular folding of several secreted proteins. In Clostridium acetobutylicum (strain ATCC 824 / DSM 792 / JCM 1419 / IAM 19013 / LMG 5710 / NBRC 13948 / NRRL B-527 / VKM B-1787 / 2291 / W), this protein is Foldase protein PrsA.